A 790-amino-acid chain; its full sequence is Disintegrin and metalloproteinase domain-containing protein 30 (790 aa).

An N-terminal signal peptide occupies residues M1–G27. Positions E28–S198 are excised as a propeptide. The Cysteine switch motif lies at Q170–D177. C172 contributes to the Zn(2+) binding site. Topologically, residues Y199 to W687 are extracellular. The region spanning K203–P393 is the Peptidase M12B domain. An N-linked (GlcNAc...) asparagine glycan is attached at N222. Intrachain disulfides connect C313–C388, C353–C373, and C355–C361. H338 contacts Zn(2+). Residue E339 is part of the active site. 2 residues coordinate Zn(2+): H342 and H348. N-linked (GlcNAc...) asparagine glycosylation is found at N372, N438, N473, and N625. The region spanning L399–D485 is the Disintegrin domain. C457 and C477 are oxidised to a cystine. Positions L629–E663 constitute an EGF-like domain. Cystine bridges form between C633–C644, C638–C650, and C652–C661. Residues V688–F708 traverse the membrane as a helical segment. Over R709–K790 the chain is Cytoplasmic. Residues Q720 to R779 are compositionally biased toward basic and acidic residues. The disordered stretch occupies residues Q720–K790. 5 consecutive repeat copies span residues Q732–V740, Q741–G749, Q750–G758, Q759–G767, and Q768–E776. The 5 X 9 AA approximate repeats stretch occupies residues Q732–E776. Residues P780 to K790 are compositionally biased toward basic residues.

As to quaternary structure, interacts with CTSD; this leads to activation of CTSD. The cofactor is Zn(2+). Expressed in brain neurons (at protein level). Expressed in testis.

Its subcellular location is the late endosome membrane. Plays a role in lysosomal amyloid precursor protein (APP) processing by cleaving and activating CTSD/cathepsin D which leads to APP degradation. The protein is Disintegrin and metalloproteinase domain-containing protein 30 (ADAM30) of Homo sapiens (Human).